A 255-amino-acid polypeptide reads, in one-letter code: Fumarate reductase cytochrome b subunit (255 aa).

A run of 5 helical transmembrane segments spans residues 33–53 (TGLI…SILI), 78–98 (IVSV…FLAL), 126–146 (WFIQ…HLFV), 168–188 (FWLL…IGLY), and 208–228 (VKWA…GAYI). Heme b contacts are provided by His44, His93, His143, and His182.

It belongs to the diheme cytochrome b FrdC family. In terms of assembly, part of an enzyme complex containing three subunits: a flavoprotein (frdA), an iron-sulfur protein (frdB), and diheme cytochrome b (frdC). Heme b is required as a cofactor.

The protein localises to the cell inner membrane. The fumarate reductase enzyme complex is required for fumarate respiration. This subunit anchors the complex in the membrane and binds a diheme cytochrome b. The protein is Fumarate reductase cytochrome b subunit (frdC) of Helicobacter pylori (strain ATCC 700392 / 26695) (Campylobacter pylori).